Consider the following 251-residue polypeptide: Ubiquinone/menaquinone biosynthesis C-methyltransferase UbiE (251 aa).

Residues T74, D95, and 123–124 each bind S-adenosyl-L-methionine; that span reads NA.

It belongs to the class I-like SAM-binding methyltransferase superfamily. MenG/UbiE family.

It catalyses the reaction a 2-demethylmenaquinol + S-adenosyl-L-methionine = a menaquinol + S-adenosyl-L-homocysteine + H(+). It carries out the reaction a 2-methoxy-6-(all-trans-polyprenyl)benzene-1,4-diol + S-adenosyl-L-methionine = a 5-methoxy-2-methyl-3-(all-trans-polyprenyl)benzene-1,4-diol + S-adenosyl-L-homocysteine + H(+). The protein operates within quinol/quinone metabolism; menaquinone biosynthesis; menaquinol from 1,4-dihydroxy-2-naphthoate: step 2/2. Its pathway is cofactor biosynthesis; ubiquinone biosynthesis. Functionally, methyltransferase required for the conversion of demethylmenaquinol (DMKH2) to menaquinol (MKH2) and the conversion of 2-polyprenyl-6-methoxy-1,4-benzoquinol (DDMQH2) to 2-polyprenyl-3-methyl-6-methoxy-1,4-benzoquinol (DMQH2). The chain is Ubiquinone/menaquinone biosynthesis C-methyltransferase UbiE from Shewanella halifaxensis (strain HAW-EB4).